The following is a 304-amino-acid chain: UDP-N-acetylenolpyruvoylglucosamine reductase (304 aa).

The 166-residue stretch at 31 to 196 folds into the FAD-binding PCMH-type domain; that stretch reads KVGGPADYLA…ISAKFNLKPG (166 aa). Arginine 175 is a catalytic residue. Serine 225 serves as the catalytic Proton donor. Glutamate 295 is a catalytic residue.

Belongs to the MurB family. FAD is required as a cofactor.

The protein localises to the cytoplasm. The catalysed reaction is UDP-N-acetyl-alpha-D-muramate + NADP(+) = UDP-N-acetyl-3-O-(1-carboxyvinyl)-alpha-D-glucosamine + NADPH + H(+). The protein operates within cell wall biogenesis; peptidoglycan biosynthesis. In terms of biological role, cell wall formation. This chain is UDP-N-acetylenolpyruvoylglucosamine reductase, found in Streptococcus thermophilus (strain ATCC BAA-491 / LMD-9).